Consider the following 449-residue polypeptide: Glycosyl hydrolase-like protein 1 (449 aa).

A beta-D-glucoside-binding positions include glutamine 22, histidine 119, 164-165 (NE), tyrosine 292, glutamate 350, tryptophan 393, and tyrosine 406. Glutamate 165 (proton donor) is an active-site residue. Residue glutamate 350 is the Nucleophile of the active site.

Belongs to the glycosyl hydrolase 1 family. As to expression, mainly expressed in flowers, flower buds and young leaves, and, to a lesser extent, in old leaves, stems and roots.

The protein localises to the cytoplasm. It participates in secondary metabolite biosynthesis; terpenoid biosynthesis. Functionally, component of the oleanane-type triterpene saponins (e.g. saponarioside A and saponarioside B) biosynthetic pathway, leading to the production of natural products with detergent properties used as traditional sources of soap. Beta-glycosidase that catalyzes the transfer of glucose moiety to QA-triFRXX to produce QA-triF(Q)RXX via the elongation of the C-28 sugar chain with a D-quinovose. The polypeptide is Glycosyl hydrolase-like protein 1 (Saponaria officinalis (Common soapwort)).